A 186-amino-acid chain; its full sequence is Large ribosomal subunit protein uL5 (186 aa).

It belongs to the universal ribosomal protein uL5 family. In terms of assembly, part of the 50S ribosomal subunit; part of the 5S rRNA/L5/L18/L25 subcomplex. Contacts the 5S rRNA and the P site tRNA. Forms a bridge to the 30S subunit in the 70S ribosome.

This is one of the proteins that bind and probably mediate the attachment of the 5S RNA into the large ribosomal subunit, where it forms part of the central protuberance. In the 70S ribosome it contacts protein S13 of the 30S subunit (bridge B1b), connecting the 2 subunits; this bridge is implicated in subunit movement. Contacts the P site tRNA; the 5S rRNA and some of its associated proteins might help stabilize positioning of ribosome-bound tRNAs. This Mycoplasmopsis synoviae (strain 53) (Mycoplasma synoviae) protein is Large ribosomal subunit protein uL5.